We begin with the raw amino-acid sequence, 72 residues long: Translation initiation factor IF-1 (72 aa).

One can recognise an S1-like domain in the interval Ala2–Arg72.

Belongs to the IF-1 family. Component of the 30S ribosomal translation pre-initiation complex which assembles on the 30S ribosome in the order IF-2 and IF-3, IF-1 and N-formylmethionyl-tRNA(fMet); mRNA recruitment can occur at any time during PIC assembly.

The protein resides in the cytoplasm. One of the essential components for the initiation of protein synthesis. Stabilizes the binding of IF-2 and IF-3 on the 30S subunit to which N-formylmethionyl-tRNA(fMet) subsequently binds. Helps modulate mRNA selection, yielding the 30S pre-initiation complex (PIC). Upon addition of the 50S ribosomal subunit IF-1, IF-2 and IF-3 are released leaving the mature 70S translation initiation complex. The protein is Translation initiation factor IF-1 of Haemophilus influenzae (strain ATCC 51907 / DSM 11121 / KW20 / Rd).